The primary structure comprises 105 residues: Thioredoxin (105 aa).

One can recognise a Thioredoxin domain in the interval 2-105 (VKIVGDLTEF…KLEEAIKKYM (104 aa)). Residues cysteine 32 and cysteine 35 each act as nucleophile in the active site. A disulfide bridge links cysteine 32 with cysteine 35. Cysteine 69 and cysteine 73 each carry S-nitrosocysteine.

This sequence belongs to the thioredoxin family. Post-translationally, may be nitrosylated on several cysteine residues, depending on the oxidation state. Nitrosylated Cys-73 may serve as donor for nitrosylation of target proteins.

It is found in the nucleus. The protein resides in the cytoplasm. It localises to the secreted. Functionally, participates in various redox reactions through the reversible oxidation of its active center dithiol to a disulfide and catalyzes dithiol-disulfide exchange reactions. Plays a role in the reversible S-nitrosylation of cysteine residues in target proteins, and thereby contributes to the response to intracellular nitric oxide. Nitrosylates the active site Cys of CASP3 in response to nitric oxide (NO), and thereby inhibits caspase-3 activity. Induces the FOS/JUN AP-1 DNA binding activity in ionizing radiation (IR) cells through its oxidation/reduction status and stimulates AP-1 transcriptional activity. This chain is Thioredoxin (TXN), found in Ophiophagus hannah (King cobra).